The sequence spans 752 residues: MNINPYFLFIDVPIQAAISTTFPYTGVPPYSHGTGTGYTIDTVIRTHEYSNKGKQYISDVTGCAMVDPTNGPLPEDNEPSAYAQLDCVLEALDRMDEEHPGLFQAASQNAMEALMVTTVDKLTQGRQTFDWTVCRNQPAATALNTTITSFRLNDLNGADKGGLVPFCQDIIDSLDKPEMTFFSVKNIKKKLPAKNRKGFLIKRIPMKVKDRITRVEYIKRALSLNTMTKDAERGKLKRRAIATAGIQIRGFVLVVENLAKNICENLEQSGLPVGGNEKKAKLSNAVAKMLSNCPPGGISMTVTGDNTKWNECLNPRIFLAMTERITRDSPIWFRDFCSIAPVLFSNKIARLGKGFMITSKTKRLKAQIPCPDLFNIPLERYNEETRAKLKKLKPFFNEEGTASLSPGMMMGMFNMLSTVLGVAALGIKNIGNKEYLWDGLQSSDDFALFVNAKDEETCMEGINDFYRTCKLLGINMSKKKSYCNETGMFEFTSMFYRDGFVSNFAMELPSFGVAGVNESADMAIGMTIIKNNMINNGMGPATAQTAIQLFIADYRYTYKCHRGDSKVEGKRMKIIKELWENTKGRDGLLVADGGPNIYNLRNLHIPEIVLKYNLMDPEYKGRLLHPQNPFVGHLSIEGIKEADITPAHGPVKKMDYDAVSGTHSWRTKRNRSILNTDQRNMILEEQCYAKCCNLFEACFNSASYRKPVGQHSMLEAMAHRLRMDARLDYESGRMSKDDFEKAMAHLGEIGYI.

Short sequence motifs (nuclear localization signal) lie at residues 187 to 195 and 203 to 216; these read IKKKLPAKN and RIPMKVKDRITRVE. The interval 249–256 is promoter-binding site; the sequence is RGFVLVVE. Residues 286–482 form the RdRp catalytic domain; it reads VAKMLSNCPP…GINMSKKKSY (197 aa).

It belongs to the influenza viruses polymerase PB1 family. In terms of assembly, influenza RNA polymerase is composed of three subunits: PB1, PB2 and PA. Interacts (via N-terminus) with PA (via C-terminus). Interacts (via C-terminus) with PB2 (via N-terminus); this interaction is essential for transcription initiation. In terms of processing, phosphorylated by host PRKCA.

The protein localises to the host nucleus. Its subcellular location is the host cytoplasm. The catalysed reaction is RNA(n) + a ribonucleoside 5'-triphosphate = RNA(n+1) + diphosphate. RNA-dependent RNA polymerase which is responsible for replication and transcription of virus RNA segments. The transcription of viral mRNAs occurs by a unique mechanism called cap-snatching. 5' methylated caps of cellular mRNAs are cleaved after 10-13 nucleotides by PA. In turn, these short capped RNAs are used as primers by PB1 for transcription of viral mRNAs. During virus replication, PB1 initiates RNA synthesis and copy vRNA into complementary RNA (cRNA) which in turn serves as a template for the production of more vRNAs. This chain is RNA-directed RNA polymerase catalytic subunit, found in Homo sapiens (Human).